A 157-amino-acid chain; its full sequence is UPF0212 protein rrnAC1165 (157 aa).

The disordered stretch occupies residues 105–157 (VLEIEEIPEESDETTEDESSSAESEADADDPPSDQSADESDDVLPEFEELIDE). The span at 106 to 157 (LEIEEIPEESDETTEDESSSAESEADADDPPSDQSADESDDVLPEFEELIDE) shows a compositional bias: acidic residues.

This sequence belongs to the UPF0212 family.

In Haloarcula marismortui (strain ATCC 43049 / DSM 3752 / JCM 8966 / VKM B-1809) (Halobacterium marismortui), this protein is UPF0212 protein rrnAC1165.